The following is a 488-amino-acid chain: Bifunctional protein HldE (488 aa).

The interval 1-332 is ribokinase; sequence MRESFLDTIQ…QELQSQQSAA (332 aa). An ATP-binding site is contributed by 208–211; it reads NKRE. Asp277 is a catalytic residue. The segment at 359-488 is cytidylyltransferase; the sequence is FTNGCFDLLH…TSNIIRKLAS (130 aa).

This sequence in the N-terminal section; belongs to the carbohydrate kinase PfkB family. The protein in the C-terminal section; belongs to the cytidylyltransferase family. In terms of assembly, homodimer.

The enzyme catalyses D-glycero-beta-D-manno-heptose 7-phosphate + ATP = D-glycero-beta-D-manno-heptose 1,7-bisphosphate + ADP + H(+). The catalysed reaction is D-glycero-beta-D-manno-heptose 1-phosphate + ATP + H(+) = ADP-D-glycero-beta-D-manno-heptose + diphosphate. The protein operates within nucleotide-sugar biosynthesis; ADP-L-glycero-beta-D-manno-heptose biosynthesis; ADP-L-glycero-beta-D-manno-heptose from D-glycero-beta-D-manno-heptose 7-phosphate: step 1/4. It functions in the pathway nucleotide-sugar biosynthesis; ADP-L-glycero-beta-D-manno-heptose biosynthesis; ADP-L-glycero-beta-D-manno-heptose from D-glycero-beta-D-manno-heptose 7-phosphate: step 3/4. Functionally, catalyzes the phosphorylation of D-glycero-D-manno-heptose 7-phosphate at the C-1 position to selectively form D-glycero-beta-D-manno-heptose-1,7-bisphosphate. Its function is as follows. Catalyzes the ADP transfer from ATP to D-glycero-beta-D-manno-heptose 1-phosphate, yielding ADP-D-glycero-beta-D-manno-heptose. The sequence is that of Bifunctional protein HldE from Methylobacillus flagellatus (strain ATCC 51484 / DSM 6875 / VKM B-1610 / KT).